The chain runs to 194 residues: Ion-translocating oxidoreductase complex subunit A (194 aa).

6 helical membrane passes run 4 to 24 (LALI…QFLG), 39 to 59 (IGLS…SHIL), 72 to 92 (LRTI…EMLV), 102 to 122 (VLGI…VALL), 135 to 155 (TTQG…FAAL), and 172 to 192 (AIGM…SGLV).

This sequence belongs to the NqrDE/RnfAE family. The complex is composed of six subunits: RnfA, RnfB, RnfC, RnfD, RnfE and RnfG.

The protein localises to the cell inner membrane. In terms of biological role, part of a membrane-bound complex that couples electron transfer with translocation of ions across the membrane. This chain is Ion-translocating oxidoreductase complex subunit A, found in Pseudomonas aeruginosa (strain LESB58).